We begin with the raw amino-acid sequence, 1118 residues long: Cytospin-A (1118 aa).

2 disordered regions span residues 1–157 and 198–221; these read MKKS…DGQI and GGKE…PHVS. Polar residues-rich tracts occupy residues 57 to 102 and 112 to 123; these read NPTS…TKET and SRASANKKQSAA. Residues 144–153 are compositionally biased toward basic and acidic residues; the sequence is SESRMSKSKS. The span at 204–215 shows a compositional bias: acidic residues; that stretch reads EGPEEEEEEEEE. Residues 225-264 are a coiled coil; sequence AADVESTLILLQEQNQAIREELNLLKSENRMLKDRLNALG. The tract at residues 289–379 is disordered; the sequence is AGSGQSDGGG…RRGSSGNASE (91 aa). Positions 343–363 are enriched in low complexity; it reads SSDDALDAPSGASSSSESECA. Coiled coils occupy residues 384 to 438 and 475 to 796; these read CLTE…MDSL and GRYM…RGRV. Disordered stretches follow at residues 771 to 790, 837 to 876, and 920 to 1001; these read QEKN…RKQD, FDSA…PPAA, and SAAS…ERKD. Residues 838–855 show a composition bias toward polar residues; sequence DSASQGPPSNGASVTPTV. The span at 861–872 shows a compositional bias: pro residues; that stretch reads PRTPLSPSPMKT. Residues 930–945 are compositionally biased toward polar residues; it reads QRVSNMDSTKTISVSR. The span at 946–956 shows a compositional bias: basic and acidic residues; sequence RSSEEMKRDMS. Residues 961-986 are compositionally biased toward low complexity; it reads ASSTSLMAMSAASAPLSLSSSSPTAS. Residues 1012–1117 enclose the Calponin-homology (CH) domain; that stretch reads GSKRNALLKW…YVTAIYKYFE (106 aa).

The protein belongs to the cytospin-A family. May interact with both microtubules and actin cytoskeleton.

Its subcellular location is the cytoplasm. It is found in the cytoskeleton. The protein localises to the spindle. The protein resides in the cell junction. It localises to the gap junction. In terms of biological role, involved in cytokinesis and spindle organization. May play a role in actin cytoskeleton organization and microtubule stabilization and hence required for proper cell adhesion and migration. The polypeptide is Cytospin-A (specc1l) (Takifugu rubripes (Japanese pufferfish)).